The chain runs to 592 residues: Aspartate--tRNA(Asp/Asn) ligase (592 aa).

Residue glutamate 172 coordinates L-aspartate. The segment at 196-199 is aspartate; it reads QLFK. L-aspartate is bound at residue arginine 218. Residues 218-220 and glutamine 227 contribute to the ATP site; that span reads RDE. L-aspartate is bound at residue histidine 442. Position 476 (glutamate 476) interacts with ATP. L-aspartate is bound at residue arginine 483. ATP is bound at residue 528-531; that stretch reads GWDR. Residues 553 to 592 form a disordered region; sequence SGTDPLTGAPTPITPEQRKEAGIDADPYAAAGRPPGRQSA.

This sequence belongs to the class-II aminoacyl-tRNA synthetase family. Type 1 subfamily. Homodimer.

It localises to the cytoplasm. It catalyses the reaction tRNA(Asx) + L-aspartate + ATP = L-aspartyl-tRNA(Asx) + AMP + diphosphate. Functionally, aspartyl-tRNA synthetase with relaxed tRNA specificity since it is able to aspartylate not only its cognate tRNA(Asp) but also tRNA(Asn). Reaction proceeds in two steps: L-aspartate is first activated by ATP to form Asp-AMP and then transferred to the acceptor end of tRNA(Asp/Asn). This Acidothermus cellulolyticus (strain ATCC 43068 / DSM 8971 / 11B) protein is Aspartate--tRNA(Asp/Asn) ligase.